The following is a 67-amino-acid chain: Cold shock protein (67 aa).

The CSD domain maps to G4–V64.

The protein resides in the cytoplasm. This chain is Cold shock protein (csp), found in Arthrobacter globiformis.